Consider the following 263-residue polypeptide: MAPK-interacting and spindle-stabilizing protein (263 aa).

Residues 13–238 are disordered; it reads GSPAPFLPSG…LGKQQGHNTT (226 aa). 2 stretches are compositionally biased toward pro residues: residues 14–34 and 140–155; these read SPAPFLPSGPSCPQPSGPYPG and GLQPSPNNPYPLPPGP. Residues 156–165 are compositionally biased toward low complexity; the sequence is SAASPGPGSL. A compositionally biased stretch (polar residues) spans 176–189; that stretch reads PSDSSNPESTLEST. Positions 202–213 are enriched in basic residues; sequence IKRRRSKKKSKR.

Belongs to the MISS family. As to quaternary structure, interacts with MAPK1. In terms of processing, phosphorylated in vitro by MAPK1.

The protein localises to the cytoplasm. Its subcellular location is the cytoskeleton. It localises to the spindle. Involved in the maintenance of the spindle integrity during the cytostatic factor (CSF) arrest of oocytes. The chain is MAPK-interacting and spindle-stabilizing protein (Mapk1ip1) from Mus musculus (Mouse).